A 310-amino-acid polypeptide reads, in one-letter code: Methionyl-tRNA formyltransferase (310 aa).

110 to 113 (SLLP) contributes to the (6S)-5,6,7,8-tetrahydrofolate binding site.

It belongs to the Fmt family.

The catalysed reaction is L-methionyl-tRNA(fMet) + (6R)-10-formyltetrahydrofolate = N-formyl-L-methionyl-tRNA(fMet) + (6S)-5,6,7,8-tetrahydrofolate + H(+). Its function is as follows. Attaches a formyl group to the free amino group of methionyl-tRNA(fMet). The formyl group appears to play a dual role in the initiator identity of N-formylmethionyl-tRNA by promoting its recognition by IF2 and preventing the misappropriation of this tRNA by the elongation apparatus. The sequence is that of Methionyl-tRNA formyltransferase from Streptomyces coelicolor (strain ATCC BAA-471 / A3(2) / M145).